The chain runs to 234 residues: MKLTWLGHSAFRLENGSAKILIDPFFTGNPGFAGQDGKSAAEGITHILLTHGHGDHVGDTVQLARETGATVLANADLAAWLSAKGVAKVDMGNTGGTVHFDGFSVTFTNALHSSAQITEDGVSHSLGNANGLMLHFEDGPAVYHMGDTDIFSDMKLINELHQPDIGLVPIGDRFTMGGAVAALACQRFFKFQNVIPCHYGSFPIIDQTPDKFVAGMEGAEARVHTPKAGDTLSF.

Belongs to the UPF0173 family.

In Agrobacterium fabrum (strain C58 / ATCC 33970) (Agrobacterium tumefaciens (strain C58)), this protein is UPF0173 metal-dependent hydrolase Atu1317.